The primary structure comprises 860 residues: Leucine--tRNA ligase (860 aa).

The 'HIGH' region signature appears at 42 to 52; the sequence is PYPSGRLHMGH. Residues 619 to 623 carry the 'KMSKS' region motif; it reads KMSKS. Residue K622 participates in ATP binding.

It belongs to the class-I aminoacyl-tRNA synthetase family.

It is found in the cytoplasm. The catalysed reaction is tRNA(Leu) + L-leucine + ATP = L-leucyl-tRNA(Leu) + AMP + diphosphate. This is Leucine--tRNA ligase from Salmonella enteritidis PT4 (strain P125109).